The chain runs to 313 residues: Porphobilinogen deaminase (313 aa).

Position 242 is an S-(dipyrrolylmethanemethyl)cysteine (Cys242).

This sequence belongs to the HMBS family. Monomer. Dipyrromethane is required as a cofactor.

The catalysed reaction is 4 porphobilinogen + H2O = hydroxymethylbilane + 4 NH4(+). The protein operates within porphyrin-containing compound metabolism; protoporphyrin-IX biosynthesis; coproporphyrinogen-III from 5-aminolevulinate: step 2/4. Its function is as follows. Tetrapolymerization of the monopyrrole PBG into the hydroxymethylbilane pre-uroporphyrinogen in several discrete steps. The sequence is that of Porphobilinogen deaminase from Escherichia coli (strain SE11).